A 373-amino-acid chain; its full sequence is MADKIRVVVLYGGRSGEHEVSLKSAASVFRHLDRTRFEVIPVSIDKTGRWQWNDLRSLDQAHAAALPILPDAPEMRLARGPDGRGVLVPITQGAAAPIAIDVVFPVIHGPLCEDGTVQGLLELADVAYVGSGVLASAVSMDKDVAKRLAEFAGIPVAPYRVLTRKAFVQDRVSSLAKAVEGLSLPVFVKPCNMGSSVGIHKVKTQDALEAALDDAFRYDVKVLVQQGIDAREIEVAVLEDETLFASLASELNPNAHHEFYSYEAKYLDPDGARVDLPARLDAAQMERVRSLATRVFAALECSGFARVDFFLDRKTGEFCFNEINTLPGFTSISMYPKMMEASGVPYGELLSRLVDLALDRHRQRQSLERGYAS.

The ATP-grasp domain maps to lysine 146–aspartate 355. Position 179–234 (valine 179–glutamate 234) interacts with ATP. Residues aspartate 308, glutamate 322, and asparagine 324 each coordinate Mg(2+).

It belongs to the D-alanine--D-alanine ligase family. The cofactor is Mg(2+). Mn(2+) serves as cofactor.

The protein resides in the cytoplasm. The catalysed reaction is 2 D-alanine + ATP = D-alanyl-D-alanine + ADP + phosphate + H(+). Its pathway is cell wall biogenesis; peptidoglycan biosynthesis. Functionally, cell wall formation. In Bradyrhizobium diazoefficiens (strain JCM 10833 / BCRC 13528 / IAM 13628 / NBRC 14792 / USDA 110), this protein is D-alanine--D-alanine ligase A.